We begin with the raw amino-acid sequence, 576 residues long: MAGUK p55 subfamily member 7 (576 aa).

L27 domains follow at residues 10 to 64 (CDMG…EKQN) and 65 to 122 (PLPI…YDPV). A PDZ domain is found at 139–220 (IIRLVKNSEP…AITFKIIPST (82 aa)). The SH3 domain occupies 228–298 (EGKIFIKALF…PSKHFQERRL (71 aa)). The tract at residues 289–383 (PSKHFQERRL…VGPVGVGLNE (95 aa)) is phospho-regulated basic and hydrophobic (PRBH) motif. The region spanning 368–560 (YRLIVLVGPV…AFNELKTTFD (193 aa)) is the Guanylate kinase-like domain. A Phosphoserine modification is found at Ser409.

The protein belongs to the MAGUK family. In terms of assembly, heterodimer; able to heterodimerize via its C-terminal L27 domain with LIN7A, LIN7B and LIN7C. Forms a tripartite complex composed of DLG1, MPP7 and LIN7 (LIN7A or LIN7C). Interacts with DLG1 via its N-terminal L27 domain. Interacts with PALS1 and PATJ. Post-translationally, phosphorylated by aPKC which promotes dissociation from the cell cortex.

Its subcellular location is the membrane. It localises to the lateral cell membrane. The protein resides in the cell junction. The protein localises to the tight junction. It is found in the adherens junction. Its subcellular location is the cytoplasm. It localises to the cell cortex. Its function is as follows. Acts as an important adapter that promotes epithelial cell polarity and tight junction formation via its interaction with DLG1. Involved in the assembly of protein complexes at sites of cell-cell contact. The protein is MAGUK p55 subfamily member 7 (Mpp7) of Mus musculus (Mouse).